The primary structure comprises 809 residues: Ribonuclease Z 1 (809 aa).

The interval 74 to 93 (ISSPDTYDSSSSSSTTSVSD) is disordered.

Belongs to the RNase Z family. Zn(2+) is required as a cofactor.

The protein localises to the nucleus. The protein resides in the cytoplasm. It carries out the reaction Endonucleolytic cleavage of RNA, removing extra 3' nucleotides from tRNA precursor, generating 3' termini of tRNAs. A 3'-hydroxy group is left at the tRNA terminus and a 5'-phosphoryl group is left at the trailer molecule.. Its function is as follows. Zinc phosphodiesterase, which displays some tRNA 3'-processing endonuclease activity. May be involved in tRNA maturation, by removing a 3'-trailer from precursor tRNA. This Schizosaccharomyces pombe (strain 972 / ATCC 24843) (Fission yeast) protein is Ribonuclease Z 1 (trz1).